We begin with the raw amino-acid sequence, 605 residues long: Elongation factor 4 (605 aa).

The 184-residue stretch at 9 to 192 (SRIRNFCIIA…AIIARVPSPA (184 aa)) folds into the tr-type G domain. GTP is bound by residues 21 to 26 (DHGKST) and 139 to 142 (NKID).

The protein belongs to the TRAFAC class translation factor GTPase superfamily. Classic translation factor GTPase family. LepA subfamily.

The protein localises to the cell inner membrane. The enzyme catalyses GTP + H2O = GDP + phosphate + H(+). In terms of biological role, required for accurate and efficient protein synthesis under certain stress conditions. May act as a fidelity factor of the translation reaction, by catalyzing a one-codon backward translocation of tRNAs on improperly translocated ribosomes. Back-translocation proceeds from a post-translocation (POST) complex to a pre-translocation (PRE) complex, thus giving elongation factor G a second chance to translocate the tRNAs correctly. Binds to ribosomes in a GTP-dependent manner. The chain is Elongation factor 4 from Chlorobium phaeovibrioides (strain DSM 265 / 1930) (Prosthecochloris vibrioformis (strain DSM 265)).